The following is a 335-amino-acid chain: Fructose-1,6-bisphosphatase class 1 (335 aa).

Mg(2+)-binding residues include glutamate 90, aspartate 113, leucine 115, and aspartate 116. Residues 116-119 (DGSS), asparagine 209, tyrosine 242, and lysine 272 contribute to the substrate site. Glutamate 278 is a Mg(2+) binding site.

This sequence belongs to the FBPase class 1 family. Homotetramer. Mg(2+) is required as a cofactor.

Its subcellular location is the cytoplasm. It catalyses the reaction beta-D-fructose 1,6-bisphosphate + H2O = beta-D-fructose 6-phosphate + phosphate. Its pathway is carbohydrate biosynthesis; gluconeogenesis. This chain is Fructose-1,6-bisphosphatase class 1, found in Histophilus somni (strain 2336) (Haemophilus somnus).